The primary structure comprises 246 residues: Neurotrophic factor BDNF precursor form (246 aa).

The first 18 residues, 1–18, serve as a signal peptide directing secretion; that stretch reads MTILFLTMVISYLSCMKA. The propeptide occupies 19-127; it reads TPMKEVSIRG…AANMSMRVRR (109 aa). N-linked (GlcNAc...) asparagine glycosylation occurs at asparagine 120. 3 disulfide bridges follow: cysteine 140–cysteine 207, cysteine 185–cysteine 236, and cysteine 195–cysteine 238.

The protein belongs to the NGF-beta family.

The protein localises to the secreted. In terms of biological role, promotes the survival of neuronal populations that are all located either in the central nervous system or directly connected to it. The polypeptide is Neurotrophic factor BDNF precursor form (BDNF) (Ptyas major (Chinese green snake)).